The sequence spans 222 residues: Flagellin B5 (222 aa).

The propeptide occupies methionine 1 to glycine 4.

Belongs to the archaeal flagellin family.

It localises to the archaeal flagellum. Functionally, flagellin is the subunit protein which polymerizes to form the filaments of archaeal flagella. In Pyrococcus abyssi (strain GE5 / Orsay), this protein is Flagellin B5 (flaB5).